Here is an 86-residue protein sequence, read N- to C-terminus: Anti-adapter protein IraP (86 aa).

A coiled-coil region spans residues 1 to 47 (MKNLIAELLLKLAQKEEESKELVAQVEALEIIVTAMLRNMAQSEQQM).

It belongs to the IraP family. Interacts with RssB.

The protein resides in the cytoplasm. Functionally, inhibits RpoS proteolysis by regulating RssB activity, thereby increasing the stability of the sigma stress factor RpoS especially during phosphate and magnesium starvation, but also in stationary phase and during nitrogen starvation. Its effect on RpoS stability is due to its interaction with RssB, which probably blocks the interaction of RssB with RpoS, and the consequent delivery of the RssB-RpoS complex to the ClpXP protein degradation pathway. The polypeptide is Anti-adapter protein IraP (Salmonella arizonae (strain ATCC BAA-731 / CDC346-86 / RSK2980)).